Reading from the N-terminus, the 484-residue chain is tRNA sulfurtransferase (484 aa).

Residues 63–167 (REMIERLTCT…LDRLFVIHRQ (105 aa)) form the THUMP domain. ATP-binding positions include 185 to 186 (LM), Lys267, Gly289, and Gln298. A disulfide bridge links Cys346 with Cys457. One can recognise a Rhodanese domain in the interval 405-483 (VLPGQIVIDI…GHTNVRVYRP (79 aa)). The active-site Cysteine persulfide intermediate is the Cys457.

The protein belongs to the ThiI family.

The protein localises to the cytoplasm. It catalyses the reaction [ThiI sulfur-carrier protein]-S-sulfanyl-L-cysteine + a uridine in tRNA + 2 reduced [2Fe-2S]-[ferredoxin] + ATP + H(+) = [ThiI sulfur-carrier protein]-L-cysteine + a 4-thiouridine in tRNA + 2 oxidized [2Fe-2S]-[ferredoxin] + AMP + diphosphate. The enzyme catalyses [ThiS sulfur-carrier protein]-C-terminal Gly-Gly-AMP + S-sulfanyl-L-cysteinyl-[cysteine desulfurase] + AH2 = [ThiS sulfur-carrier protein]-C-terminal-Gly-aminoethanethioate + L-cysteinyl-[cysteine desulfurase] + A + AMP + 2 H(+). Its pathway is cofactor biosynthesis; thiamine diphosphate biosynthesis. Its function is as follows. Catalyzes the ATP-dependent transfer of a sulfur to tRNA to produce 4-thiouridine in position 8 of tRNAs, which functions as a near-UV photosensor. Also catalyzes the transfer of sulfur to the sulfur carrier protein ThiS, forming ThiS-thiocarboxylate. This is a step in the synthesis of thiazole, in the thiamine biosynthesis pathway. The sulfur is donated as persulfide by IscS. The sequence is that of tRNA sulfurtransferase from Pseudomonas aeruginosa (strain UCBPP-PA14).